We begin with the raw amino-acid sequence, 211 residues long: MTKTVALLDYGSGNLRSAQRALEHVGAEVIVTSDPDICTNADGLLVPGVGAFDACMKGLRGVFGHRIIGTRLAGGRPVMGICVGMQILFDEGIEHGIQTRGCGEWSGRVERLQARILPHMGWNTVEKQPGSEMFAGLSEDERYYFVHTYGVRDWTLVTDDLTTPPLVTWAVHENDRFVAAVENGALWATQFHPEKSGDAGAQLLRNWINHI.

One can recognise a Glutamine amidotransferase type-1 domain in the interval 4–211 (TVALLDYGSG…QLLRNWINHI (208 aa)). The active-site Nucleophile is the Cys-82. Active-site residues include His-192 and Glu-194.

As to quaternary structure, heterodimer of HisH and HisF.

The protein localises to the cytoplasm. It catalyses the reaction 5-[(5-phospho-1-deoxy-D-ribulos-1-ylimino)methylamino]-1-(5-phospho-beta-D-ribosyl)imidazole-4-carboxamide + L-glutamine = D-erythro-1-(imidazol-4-yl)glycerol 3-phosphate + 5-amino-1-(5-phospho-beta-D-ribosyl)imidazole-4-carboxamide + L-glutamate + H(+). It carries out the reaction L-glutamine + H2O = L-glutamate + NH4(+). The protein operates within amino-acid biosynthesis; L-histidine biosynthesis; L-histidine from 5-phospho-alpha-D-ribose 1-diphosphate: step 5/9. Its function is as follows. IGPS catalyzes the conversion of PRFAR and glutamine to IGP, AICAR and glutamate. The HisH subunit catalyzes the hydrolysis of glutamine to glutamate and ammonia as part of the synthesis of IGP and AICAR. The resulting ammonia molecule is channeled to the active site of HisF. The polypeptide is Imidazole glycerol phosphate synthase subunit HisH (Corynebacterium efficiens (strain DSM 44549 / YS-314 / AJ 12310 / JCM 11189 / NBRC 100395)).